A 547-amino-acid chain; its full sequence is MPQLLLLACLLIIVTRVAPRALDPCSAYISLNEPWRNTEHQFDESRGSPLCDNSVDGEWYRFTGMAGDAMPTFCIPENHCGTHAPVWLNGSHPLEGDGIVQRQACASFNGNCCLWNTTVEVKSCPGGYYVYRLTKPSVCFHVYCGHFYDICDDDCHGSCLGTSECTCAPGTVLGPDRQTCFDENECEQNNGGCSEICVNLKNSYRCECGIGRVLRSDGKTCEDIEGCHNNNGGCSHSCLTSETGYQCECPRGLVLSEDNHTCQVPVFCKSNTIEVSIPRDLVGGLELFLTNTSCRGVSNGTHVNILFSLKTCGTVVDVVNDKIVASNLVTGLPKQTPGSSGDIIIRTSKLLIPVTCEFPRLYTISEGYVPNLRNTPLEIMSRSHGIFPFTLEIFKDHEFEEPYREALPTLKLRDSLYFGIEPLVHVNGLESLVESCFATPTSKIDEIMKYYIIQDGCVSDDSVKQYTSRDHLAKHFQVPVFKFVGKDHKEVFLHCRVLVCGMLDERSRCAQGCHRRVRREASTEGEDASGPRSQMLTGGPISIDWED.

The first 19 residues, 1-19 (MPQLLLLACLLIIVTRVAP), serve as a signal peptide directing secretion. N-linked (GlcNAc...) asparagine glycans are attached at residues Asn89 and Asn116. In terms of domain architecture, EGF-like; calcium-binding spans 182–222 (DENECEQNNGGCSEICVNLKNSYRCECGIGRVLRSDGKTCE). 3 disulfide bridges follow: Cys186–Cys197, Cys193–Cys206, and Cys208–Cys221. Residues 267 to 516 (FCKSNTIEVS…SRCAQGCHRR (250 aa)) form the ZP domain. Asn299 carries an N-linked (GlcNAc...) asparagine glycan. The segment at 520–547 (EASTEGEDASGPRSQMLTGGPISIDWED) is disordered.

The protein localises to the nucleus envelope. Its function is as follows. May be involved in hepatocellular function and development. The sequence is that of Oncoprotein-induced transcript 3 protein (OIT3) from Bos taurus (Bovine).